We begin with the raw amino-acid sequence, 196 residues long: uncharacterized protein (196 aa).

One can recognise an HD domain in the interval 51-164; it reads VAEHSLLVEE…DRIFGKPDPV (114 aa).

This is an uncharacterized protein from Rhodobacter capsulatus (strain ATCC BAA-309 / NBRC 16581 / SB1003).